Consider the following 535-residue polypeptide: UDP-N-acetylmuramoyl-L-alanyl-D-glutamate--2,6-diaminopimelate ligase (535 aa).

Position 67 (L67) interacts with UDP-N-acetyl-alpha-D-muramoyl-L-alanyl-D-glutamate. 153 to 159 (GTSGKTT) contacts ATP. Residues 195 to 196 (TT), S222, and R230 each bind UDP-N-acetyl-alpha-D-muramoyl-L-alanyl-D-glutamate. K262 is modified (N6-carboxylysine). Meso-2,6-diaminopimelate-binding positions include R424, 448–451 (DNPR), G502, and E506. Positions 448–451 (DNPR) match the Meso-diaminopimelate recognition motif motif.

This sequence belongs to the MurCDEF family. MurE subfamily. Mg(2+) is required as a cofactor. In terms of processing, carboxylation is probably crucial for Mg(2+) binding and, consequently, for the gamma-phosphate positioning of ATP.

It localises to the cytoplasm. It catalyses the reaction UDP-N-acetyl-alpha-D-muramoyl-L-alanyl-D-glutamate + meso-2,6-diaminopimelate + ATP = UDP-N-acetyl-alpha-D-muramoyl-L-alanyl-gamma-D-glutamyl-meso-2,6-diaminopimelate + ADP + phosphate + H(+). It participates in cell wall biogenesis; peptidoglycan biosynthesis. Catalyzes the addition of meso-diaminopimelic acid to the nucleotide precursor UDP-N-acetylmuramoyl-L-alanyl-D-glutamate (UMAG) in the biosynthesis of bacterial cell-wall peptidoglycan. The chain is UDP-N-acetylmuramoyl-L-alanyl-D-glutamate--2,6-diaminopimelate ligase from Mycobacterium bovis (strain ATCC BAA-935 / AF2122/97).